The primary structure comprises 158 residues: GTP-dependent dephospho-CoA kinase (158 aa).

GTP is bound by residues Asp-35, Val-36, Asp-54, Lys-56, Glu-109, and Asp-132.

This sequence belongs to the GTP-dependent DPCK family.

The enzyme catalyses 3'-dephospho-CoA + GTP = GDP + CoA + H(+). The protein operates within cofactor biosynthesis; coenzyme A biosynthesis. In terms of biological role, catalyzes the GTP-dependent phosphorylation of the 3'-hydroxyl group of dephosphocoenzyme A to form coenzyme A (CoA). This chain is GTP-dependent dephospho-CoA kinase, found in Methanococcus maripaludis (strain C7 / ATCC BAA-1331).